Consider the following 518-residue polypeptide: Bifunctional purine biosynthesis protein PurH (518 aa).

Positions 1–144 (MSKRALISVS…KNHAAVTVVC (144 aa)) constitute an MGS-like domain.

This sequence belongs to the PurH family.

It carries out the reaction (6R)-10-formyltetrahydrofolate + 5-amino-1-(5-phospho-beta-D-ribosyl)imidazole-4-carboxamide = 5-formamido-1-(5-phospho-D-ribosyl)imidazole-4-carboxamide + (6S)-5,6,7,8-tetrahydrofolate. The catalysed reaction is IMP + H2O = 5-formamido-1-(5-phospho-D-ribosyl)imidazole-4-carboxamide. It functions in the pathway purine metabolism; IMP biosynthesis via de novo pathway; 5-formamido-1-(5-phospho-D-ribosyl)imidazole-4-carboxamide from 5-amino-1-(5-phospho-D-ribosyl)imidazole-4-carboxamide (10-formyl THF route): step 1/1. The protein operates within purine metabolism; IMP biosynthesis via de novo pathway; IMP from 5-formamido-1-(5-phospho-D-ribosyl)imidazole-4-carboxamide: step 1/1. The sequence is that of Bifunctional purine biosynthesis protein PurH from Lactococcus lactis subsp. cremoris (strain SK11).